We begin with the raw amino-acid sequence, 132 residues long: Small ribosomal subunit protein uS8 (132 aa).

The protein belongs to the universal ribosomal protein uS8 family. In terms of assembly, part of the 30S ribosomal subunit. Contacts proteins S5 and S12.

Functionally, one of the primary rRNA binding proteins, it binds directly to 16S rRNA central domain where it helps coordinate assembly of the platform of the 30S subunit. The protein is Small ribosomal subunit protein uS8 of Mycobacterium bovis (strain ATCC BAA-935 / AF2122/97).